The primary structure comprises 485 residues: Beta-amyrin 28-monooxygenase CYP716A378 (485 aa).

A helical; Signal-anchor for type II membrane protein transmembrane segment spans residues 3-23; it reads LFFICGLVLFSTLSLISLFLL. 2 N-linked (GlcNAc...) asparagine glycosylation sites follow: asparagine 25 and asparagine 386. Cysteine 426 contributes to the heme binding site.

This sequence belongs to the cytochrome P450 family. It depends on heme as a cofactor. As to expression, mainly expressed in flowers and flower buds, to a lesser extent in young leaves and, at low levels, in old leaves, stems and roots.

It localises to the membrane. It carries out the reaction beta-amyrin + 3 reduced [NADPH--hemoprotein reductase] + 3 O2 = oleanolate + 3 oxidized [NADPH--hemoprotein reductase] + 4 H2O + 4 H(+). The protein operates within secondary metabolite biosynthesis; terpenoid biosynthesis. Functionally, component of the oleanane-type triterpene saponins (e.g. saponarioside A and saponarioside B) biosynthetic pathway, leading to the production of natural products with detergent properties used as traditional sources of soap. An oxidoreductase that facilitates the oxidation of the methyl group to a carboxyl group at the C-28 position of beta-amyrin, resulting in the formation of oleanolate. This chain is Beta-amyrin 28-monooxygenase CYP716A378, found in Saponaria officinalis (Common soapwort).